Here is a 555-residue protein sequence, read N- to C-terminus: Cyclin-T1.2 (555 aa).

Disordered stretches follow at residues 315–429 (SYKG…NSSK) and 505–555 (PADS…GELV). Residues 321–335 (KPLSNSSDSPSTRPS) are compositionally biased toward low complexity. Basic and acidic residues predominate over residues 341-359 (KNQKVVEQELMEQRMKEAA). Residues 382–398 (TSSSASNNSNHQNRSSS) are compositionally biased toward low complexity. Residues 521–543 (PDEPSPPVSQILLPPPPPPPILP) show a composition bias toward pro residues.

This sequence belongs to the cyclin family. Cyclin C subfamily.

Functionally, regulatory subunit of the cyclin-dependent kinase pair (CDK9/cyclin T) complex, also called positive transcription elongation factor B (P-TEFb), which is proposed to facilitate the transition from abortive to production elongation by phosphorylating the CTD (carboxy-terminal domain) of the large subunit of RNA polymerase II (RNAP II). This Caenorhabditis elegans protein is Cyclin-T1.2 (cit-1.2).